The primary structure comprises 499 residues: MLELSESNIHLNANAIDKQQAIEMAVSALVQAGNVENGYLQGMLARELQTSTFLGNGIAIPHGTLDTRLMVKKTGVQVFQFPQGIEWGEGNIAYVVIGIAARSDEHLSLLRQLTHVLSDEDTAAKLAKITDVAEFCAILMGETIDPFEIPAANISLDVNTQSLLTLVAINAGQLQVQSAVENRFISEVINNAALPLGKGLWVTDSVVGNVKNALAFSRAKTIFSHNGKAVKGVITVSAVGDQINPTLVRLLDDDVQTTLLNGNSTEILTALLGSSSDVETQSVEGAVVGTFTIRNEHGLHARPSANLVNEVKKFTSKITMQNLTRESEVVSAKSLMKIVALGVTQGHRLRFVAEGEDAKQAIESLGKAIANGLGENVSAVPPSEPDTIEIMGDQIHTPAVTEDDNLPANAIEAVFVIKNEQGLHARPSAILVNEVKKYNASVAVQNLDRNSQLVSAKSLMKIVALGVVKGTRLRFVATGEEAQQAIDGIGAVIESGLGE.

The region spanning 2–142 is the PTS EIIA type-2 domain; it reads LELSESNIHL…AEFCAILMGE (141 aa). His62 (tele-phosphohistidine intermediate; for EIIA activity) is an active-site residue. His62 is modified (phosphohistidine; by HPr). Residues 155 to 285 form a m domain region; sequence SLDVNTQSLL…SDVETQSVEG (131 aa). Residues 286 to 376 enclose the HPr 1 domain; sequence AVVGTFTIRN…KAIANGLGEN (91 aa). The active-site Pros-phosphohistidine intermediate; for HPr 1 activity is His300. Position 300 is a phosphohistidine (His300). The segment at 378 to 409 is linker; that stretch reads SAVPPSEPDTIEIMGDQIHTPAVTEDDNLPAN. An HPr 2 domain is found at 410–499; sequence AIEAVFVIKN…GAVIESGLGE (90 aa). Position 424 is a phosphohistidine (His424). The Pros-phosphohistidine intermediate; for HPr 2 activity role is filled by His424.

Its subcellular location is the cytoplasm. Functionally, the phosphoenolpyruvate-dependent sugar phosphotransferase system (sugar PTS), a major carbohydrate active transport system, catalyzes the phosphorylation of incoming sugar substrates concomitantly with their translocation across the cell membrane. The enzyme II FruAB PTS system is involved in fructose transport. The protein is Multiphosphoryl transfer protein (fruB) of Haemophilus influenzae (strain ATCC 51907 / DSM 11121 / KW20 / Rd).